A 252-amino-acid polypeptide reads, in one-letter code: U2 small nuclear ribonucleoprotein A' (252 aa).

LRR repeat units follow at residues 41–62 (PHDAIDFTDNDIQVLGNFPLSP), 63–84 (RIRTLLLARNRIAQIQSTLPNA), and 87–108 (NLKNLVLASNNIGELADLEVLG). The region spanning 121–159 (NPVTKKENYRYWVLWLCPQVRFLDYVKVKDAERQKAKEL) is the LRRCT domain.

This sequence belongs to the U2 small nuclear ribonucleoprotein A family. In terms of assembly, associated with the spliceosome.

The protein resides in the nucleus. Functionally, involved in pre-mRNA splicing. This is U2 small nuclear ribonucleoprotein A' (lea-1) from Neurospora crassa (strain ATCC 24698 / 74-OR23-1A / CBS 708.71 / DSM 1257 / FGSC 987).